The sequence spans 409 residues: uncharacterized protein (409 aa).

Residues 1 to 209 (MRVFVARQPI…GHDLSTHFYS (209 aa)) enclose the EAL domain. The HDOD domain maps to 203–392 (LSTHFYSYYE…GNQLDKEEAY (190 aa)).

This is an uncharacterized protein from Bacillus subtilis (strain 168).